Here is a 536-residue protein sequence, read N- to C-terminus: Glucan 1,6-alpha-glucosidase (536 aa).

Catalysis depends on Asp-194, which acts as the Nucleophile. Residue Glu-236 is the Proton donor of the active site.

Belongs to the glycosyl hydrolase 13 family.

It localises to the cytoplasm. It catalyses the reaction Hydrolysis of (1-&gt;6)-alpha-D-glucosidic linkages in (1-&gt;6)-alpha-D-glucans and derived oligosaccharides.. The physiological substrates may be short isomaltosaccharides. The sequence is that of Glucan 1,6-alpha-glucosidase (dexB) from Streptococcus mutans serotype c (strain ATCC 700610 / UA159).